The following is a 309-amino-acid chain: uncharacterized protein (309 aa).

The Radical SAM core domain maps to arginine 17 to proline 254. Residues cysteine 33, cysteine 45, and cysteine 48 each contribute to the [4Fe-4S] cluster site.

Belongs to the radical SAM superfamily. Requires [4Fe-4S] cluster as cofactor.

This is an uncharacterized protein from Escherichia coli O157:H7.